The sequence spans 674 residues: DNA ligase (674 aa).

NAD(+) contacts are provided by residues 35 to 39 (DAEYD), 84 to 85 (SL), and Glu116. Lys118 (N6-AMP-lysine intermediate) is an active-site residue. Positions 139, 176, 293, and 317 each coordinate NAD(+). Residues Cys411, Cys414, Cys429, and Cys435 each contribute to the Zn(2+) site. In terms of domain architecture, BRCT spans 593-674 (DGVKPLEGTT…LLALLEEHGV (82 aa)).

This sequence belongs to the NAD-dependent DNA ligase family. LigA subfamily. Mg(2+) serves as cofactor. The cofactor is Mn(2+).

The enzyme catalyses NAD(+) + (deoxyribonucleotide)n-3'-hydroxyl + 5'-phospho-(deoxyribonucleotide)m = (deoxyribonucleotide)n+m + AMP + beta-nicotinamide D-nucleotide.. In terms of biological role, DNA ligase that catalyzes the formation of phosphodiester linkages between 5'-phosphoryl and 3'-hydroxyl groups in double-stranded DNA using NAD as a coenzyme and as the energy source for the reaction. It is essential for DNA replication and repair of damaged DNA. The sequence is that of DNA ligase from Saccharophagus degradans (strain 2-40 / ATCC 43961 / DSM 17024).